The following is a 543-amino-acid chain: Chaperonin GroEL (543 aa).

ATP-binding positions include 29 to 32 (TLGP), lysine 50, 86 to 90 (DGTTT), glycine 413, 480 to 482 (NAA), and aspartate 496. A disordered region spans residues 524–543 (EKPEKKESTPASAGAGDMDF).

This sequence belongs to the chaperonin (HSP60) family. Forms a cylinder of 14 subunits composed of two heptameric rings stacked back-to-back. Interacts with the co-chaperonin GroES.

The protein resides in the cytoplasm. The catalysed reaction is ATP + H2O + a folded polypeptide = ADP + phosphate + an unfolded polypeptide.. Its function is as follows. Together with its co-chaperonin GroES, plays an essential role in assisting protein folding. The GroEL-GroES system forms a nano-cage that allows encapsulation of the non-native substrate proteins and provides a physical environment optimized to promote and accelerate protein folding. This Thermus thermophilus (strain ATCC BAA-163 / DSM 7039 / HB27) protein is Chaperonin GroEL.